Here is a 447-residue protein sequence, read N- to C-terminus: uncharacterized protein (447 aa).

3 helical membrane-spanning segments follow: residues 28-48 (IVIVSATYSISLDSTVLYPAV), 241-261 (IDASFTSIFYSVFMLSIYYAI), and 397-417 (PFVLNVITVADGPCSFSLSIF).

The protein resides in the membrane. This is an uncharacterized protein from Schizosaccharomyces pombe (strain 972 / ATCC 24843) (Fission yeast).